Consider the following 236-residue polypeptide: 27 kDa hemolymph protein (236 aa).

Residues 1–17 form the signal peptide; the sequence is MMWKLIIVTILAVGVLC.

In terms of assembly, monomer. In terms of tissue distribution, hemolymph.

The protein resides in the secreted. The sequence is that of 27 kDa hemolymph protein from Galleria mellonella (Greater wax moth).